We begin with the raw amino-acid sequence, 362 residues long: Chorismate synthase (362 aa).

NADP(+)-binding residues include arginine 48 and arginine 54. Residues arginine 125–serine 127, asparagine 238–alanine 239, glycine 278, lysine 293–serine 297, and arginine 319 contribute to the FMN site.

The protein belongs to the chorismate synthase family. As to quaternary structure, homotetramer. The cofactor is FMNH2.

The catalysed reaction is 5-O-(1-carboxyvinyl)-3-phosphoshikimate = chorismate + phosphate. It functions in the pathway metabolic intermediate biosynthesis; chorismate biosynthesis; chorismate from D-erythrose 4-phosphate and phosphoenolpyruvate: step 7/7. In terms of biological role, catalyzes the anti-1,4-elimination of the C-3 phosphate and the C-6 proR hydrogen from 5-enolpyruvylshikimate-3-phosphate (EPSP) to yield chorismate, which is the branch point compound that serves as the starting substrate for the three terminal pathways of aromatic amino acid biosynthesis. This reaction introduces a second double bond into the aromatic ring system. This Aeromonas salmonicida (strain A449) protein is Chorismate synthase.